Here is a 251-residue protein sequence, read N- to C-terminus: PF03932 family protein CutC (251 aa).

It belongs to the CutC family.

The protein localises to the cytoplasm. This is PF03932 family protein CutC from Edwardsiella ictaluri (strain 93-146).